Consider the following 218-residue polypeptide: Large ribosomal subunit protein uL3 (218 aa).

Belongs to the universal ribosomal protein uL3 family. As to quaternary structure, part of the 50S ribosomal subunit. Forms a cluster with proteins L14 and L19.

Its function is as follows. One of the primary rRNA binding proteins, it binds directly near the 3'-end of the 23S rRNA, where it nucleates assembly of the 50S subunit. This chain is Large ribosomal subunit protein uL3, found in Syntrophus aciditrophicus (strain SB).